The sequence spans 682 residues: Pesticidal crystal protein Cry19Ba (682 aa).

Belongs to the delta endotoxin family.

Functionally, promotes colloidosmotic lysis by binding to the midgut epithelial cells of mosquitos. Has larvicidal activity against Culex pipiens molestus, but not to Anopheles stephensi. The protein is Pesticidal crystal protein Cry19Ba of Bacillus thuringiensis subsp. higo.